Here is a 201-residue protein sequence, read N- to C-terminus: Casparian strip membrane protein 7 (201 aa).

Acidic residues predominate over residues 1–11 (MEAGEEIEDGE). A disordered region spans residues 1-26 (MEAGEEIEDGEPSTPTYKAHHPPPHL). At 1–34 (MEAGEEIEDGEPSTPTYKAHHPPPHLPPPMRSSG) the chain is on the cytoplasmic side. Residues 35 to 55 (VSLVLSVADLVLRFVAIGGTA) traverse the membrane as a helical segment. The Extracellular segment spans residues 56–86 (GSAIAMATTSETLPFAAPFVRFRAEYSDLPT). A helical membrane pass occupies residues 87 to 107 (LMFFVVASSVVCAYLVLSLPA). The Cytoplasmic portion of the chain corresponds to 108–128 (SVVHVVRPGARSSRAILAFLD). Residues 129–149 (TVMLALLTASASAAAAIVYLA) form a helical membrane-spanning segment. At 150–171 (HRGSARANWLGICQQFTSFCQR) the chain is on the extracellular side. Residues 172–192 (ITASLVGSFAAAVVLVALVFL) form a helical membrane-spanning segment. Residues 193-201 (SALSLARRA) are Cytoplasmic-facing.

This sequence belongs to the Casparian strip membrane proteins (CASP) family. As to quaternary structure, homodimer and heterodimers.

It is found in the cell membrane. Regulates membrane-cell wall junctions and localized cell wall deposition. Required for establishment of the Casparian strip membrane domain (CSD) and the subsequent formation of Casparian strips, a cell wall modification of the root endodermis that determines an apoplastic barrier between the intraorganismal apoplasm and the extraorganismal apoplasm and prevents lateral diffusion. In Oryza sativa subsp. japonica (Rice), this protein is Casparian strip membrane protein 7.